We begin with the raw amino-acid sequence, 1865 residues long: Dedicator of cytokinesis protein 1 (1865 aa).

The 62-residue stretch at 9 to 70 (REEKYGVAFY…PASYIHLKEA (62 aa)) folds into the SH3 domain. The C2 DOCK-type domain occupies 425-609 (RNDIYVTLVQ…DSFQISTLVC (185 aa)). Positions 1207-1617 (YKEIEREEMY…VEKQYGVRTM (411 aa)) constitute a DOCKER domain. Positions 1613–1723 (GVRTMPSGLD…FKPADSSLQQ (111 aa)) are disordered. A compositionally biased stretch (low complexity) spans 1639-1664 (PSSSRPLSVASVSSFSSDSTPSRPGS). A compositionally biased stretch (basic and acidic residues) spans 1680–1694 (RSQDKLDKDDPDKEK). S1681 is subject to Phosphoserine. Residues 1687–1695 (KDDPDKEKK) form a phosphoinositide-binding region. The segment covering 1695–1704 (KDKKKEKRNS) has biased composition (basic residues). Residues 1705–1716 (KHQEIFDKEFKP) are compositionally biased toward basic and acidic residues. 4 positions are modified to phosphoserine: S1743, S1756, S1761, and S1764. Disordered stretches follow at residues 1753 to 1778 (RRFS…AKLS) and 1801 to 1865 (PLPL…GIVQ). Residues 1756–1766 (SVSPASPSSQQ) are compositionally biased toward low complexity. A phosphothreonine mark is found at T1767 and T1772. The segment at 1793–1819 (MDVADVPPPLPLKGNMADYGNLMENQD) is interaction with NCK2 second and third SH3 domain (minor). The SH3-binding; interaction with CRK motif lies at 1799 to 1805 (PPPLPLK). The interval 1820–1836 (MMVSPTSPPPPPPQRQQ) is interaction with NCK2 third SH3 domain (major). Over residues 1825–1851 (TSPPPPPPQRQQPPPLPSKTPPPPPPK) the composition is skewed to pro residues. An interaction with NCK2 (minor) region spans residues 1837–1852 (PPPLPSKTPPPPPPKT). The SH3-binding; interaction with CRK motif lies at 1838-1843 (PPLPSK). Position 1858 is a phosphoserine (S1858).

Belongs to the DOCK family. Interacts with the SH3 domains of CRK and NCK2 via multiple sites. Interacts with nucleotide-free RAC1 via its DOCKER domain. Interacts with ELMO1, ELMO2 and probably ELMO3 via its SH3 domain. Interacts with RAC1. Interacts with ELMO1 and ADGRB1. Identified in a complex with AUTS2 and ELMO2.

The protein localises to the cytoplasm. It is found in the membrane. Functionally, involved in cytoskeletal rearrangements required for phagocytosis of apoptotic cells and cell motility. Along with DOCK1, mediates CRK/CRKL regulation of epithelial and endothelial cell spreading and migration on type IV collagen. Functions as a guanine nucleotide exchange factor (GEF), which activates Rac Rho small GTPases by exchanging bound GDP for free GTP. Its GEF activity may be enhanced by ELMO1. This chain is Dedicator of cytokinesis protein 1 (Dock1), found in Mus musculus (Mouse).